A 329-amino-acid chain; its full sequence is tRNA (cytidine(32)/guanosine(34)-2'-O)-methyltransferase (329 aa).

S-adenosyl-L-methionine contacts are provided by Gly53, Trp55, Asp75, Asp91, and Asp116. Catalysis depends on Lys156, which acts as the Proton acceptor. The tract at residues 221-240 (DFNQLDGPTRIIVPFVTCGD) is required for binding to WDR6. Phosphoserine is present on Ser271.

Belongs to the class I-like SAM-binding methyltransferase superfamily. RNA methyltransferase RlmE family. TRM7 subfamily. Interacts with WDR6; the interaction is direct, and required for 2'-O-methylation of position 34 in substrate tRNAs. In terms of tissue distribution, found in fetal brain, lung, liver and kidney. Widely expressed in adult tissue; with high expression in heart and liver, lower expression in skeletal muscle, kidney, and pancreas and also lowly expressed in brain and lung. In the adult brain, expressed in amygdala, caudate nucleus, corpus callosum, hippocampus and thalamus.

The protein localises to the cytoplasm. Its subcellular location is the nucleus. It catalyses the reaction cytidine(32)/guanosine(34) in tRNA + 2 S-adenosyl-L-methionine = 2'-O-methylcytidine(32)/2'-O-methylguanosine(34) in tRNA + 2 S-adenosyl-L-homocysteine + 2 H(+). Inhibited by 2,6-diaminopurine (DAP); inhibition promotes UGA stop-codon readthrough during translation by misincorporation of tRNA(Trp) in the nascent polypeptide. In terms of biological role, methylates the 2'-O-ribose of nucleotides at positions 32 and 34 of the tRNA anticodon loop of substrate tRNAs. Requisite for faithful cytoplasmic translation. Requires THADA for methylation of the nucleotide at position 32 of the anticodon loop of substrate tRNAs. Requires WDR6 for methylation of the nucleotide at position 34 of the anticodon loop of substrate tRNAs. Promotes translation efficiency of the UUU codon. Plays a role in neurogenesis. Required for expression of genes involved in neurogenesis, mitochondrial translation and energy generation, and lipid biosynthesis. Requisite for RNA-mediated gene silencing. May modify position 32 in tRNA(Arg(ACG)), tRNA(Arg(CCG)), tRNA(Arg(UCG)), tRNA(Cys(GCA)), tRNA(Cys(ACA)), tRNA(Gln(CUG)), tRNA(Gln(UUG)), tRNA(Gly(CCC)), tRNA(Leu(CAG))/tRNA(Leu(CAA)), tRNA(Leu(A/IAG)), tRNA(Leu(UAG)), tRNA(Phe(GAA)), tRNA(Pro(AGG))/tRNA(Pro(CGG))/tRNA(Pro(UGG)) and tRNA(Trp(CCA)), and position 34 in tRNA(Phe(GAA)), tRNA(Leu(CAA)), tRNA(Sec(UCA)), and tRNA(Trp(CCA)). This is tRNA (cytidine(32)/guanosine(34)-2'-O)-methyltransferase from Homo sapiens (Human).